The following is a 406-amino-acid chain: Acetate kinase (406 aa).

Mg(2+) is bound at residue Asn-7. Lys-14 is a binding site for ATP. Arg-90 lines the substrate pocket. Asp-147 acts as the Proton donor/acceptor in catalysis. ATP is bound by residues 207-211 (HLGNG), 283-285 (DMR), and 331-335 (GVGEN). Position 385 (Glu-385) interacts with Mg(2+).

Belongs to the acetokinase family. Homodimer. The cofactor is Mg(2+). Mn(2+) serves as cofactor.

The protein localises to the cytoplasm. The enzyme catalyses acetate + ATP = acetyl phosphate + ADP. It functions in the pathway metabolic intermediate biosynthesis; acetyl-CoA biosynthesis; acetyl-CoA from acetate: step 1/2. Functionally, catalyzes the formation of acetyl phosphate from acetate and ATP. Can also catalyze the reverse reaction. The polypeptide is Acetate kinase (Thermosipho melanesiensis (strain DSM 12029 / CIP 104789 / BI429)).